Here is a 330-residue protein sequence, read N- to C-terminus: Ketol-acid reductoisomerase (NADP(+)) (330 aa).

The 182-residue stretch at 3 to 184 folds into the KARI N-terminal Rossmann domain; it reads LPVYYDKDID…GGGRMGVLET (182 aa). Residues 26 to 29, Ser-52, and Ser-54 contribute to the NADP(+) site; that span reads YGAQ. His-109 is an active-site residue. Gly-135 provides a ligand contact to NADP(+). Residues 185 to 329 enclose the KARI C-terminal knotted domain; that stretch reads SFKEECESDL…EILRAPFNHK (145 aa). The Mg(2+) site is built by Asp-193, Glu-197, Glu-229, and Glu-233. Ser-254 serves as a coordination point for substrate.

Belongs to the ketol-acid reductoisomerase family. Mg(2+) serves as cofactor.

It catalyses the reaction (2R)-2,3-dihydroxy-3-methylbutanoate + NADP(+) = (2S)-2-acetolactate + NADPH + H(+). It carries out the reaction (2R,3R)-2,3-dihydroxy-3-methylpentanoate + NADP(+) = (S)-2-ethyl-2-hydroxy-3-oxobutanoate + NADPH + H(+). Its pathway is amino-acid biosynthesis; L-isoleucine biosynthesis; L-isoleucine from 2-oxobutanoate: step 2/4. The protein operates within amino-acid biosynthesis; L-valine biosynthesis; L-valine from pyruvate: step 2/4. Its function is as follows. Involved in the biosynthesis of branched-chain amino acids (BCAA). Catalyzes an alkyl-migration followed by a ketol-acid reduction of (S)-2-acetolactate (S2AL) to yield (R)-2,3-dihydroxy-isovalerate. In the isomerase reaction, S2AL is rearranged via a Mg-dependent methyl migration to produce 3-hydroxy-3-methyl-2-ketobutyrate (HMKB). In the reductase reaction, this 2-ketoacid undergoes a metal-dependent reduction by NADPH to yield (R)-2,3-dihydroxy-isovalerate. The sequence is that of Ketol-acid reductoisomerase (NADP(+)) from Helicobacter pylori (strain Shi470).